The chain runs to 163 residues: Putative ribose 5-phosphate isomerase (163 aa).

16 to 17 provides a ligand contact to D-ribulose 5-phosphate; the sequence is DD. Cys-76 functions as the Proton acceptor in the catalytic mechanism. D-ribulose 5-phosphate is bound by residues 77–81, Asn-110, Arg-120, and Lys-148; that span reads GTGLG.

The protein belongs to the LacAB/RpiB family. As to quaternary structure, homodimer or homotetramer.

This Coccidioides immitis (strain RS) (Valley fever fungus) protein is Putative ribose 5-phosphate isomerase.